Here is a 169-residue protein sequence, read N- to C-terminus: N5-carboxyaminoimidazole ribonucleotide mutase (169 aa).

Positions 16, 19, and 46 each coordinate substrate.

Belongs to the AIR carboxylase family. Class I subfamily.

It carries out the reaction 5-carboxyamino-1-(5-phospho-D-ribosyl)imidazole + H(+) = 5-amino-1-(5-phospho-D-ribosyl)imidazole-4-carboxylate. It functions in the pathway purine metabolism; IMP biosynthesis via de novo pathway; 5-amino-1-(5-phospho-D-ribosyl)imidazole-4-carboxylate from 5-amino-1-(5-phospho-D-ribosyl)imidazole (N5-CAIR route): step 2/2. Its function is as follows. Catalyzes the conversion of N5-carboxyaminoimidazole ribonucleotide (N5-CAIR) to 4-carboxy-5-aminoimidazole ribonucleotide (CAIR). This chain is N5-carboxyaminoimidazole ribonucleotide mutase, found in Escherichia coli O157:H7.